We begin with the raw amino-acid sequence, 873 residues long: Probable beta-glucosidase A (873 aa).

Residues 1 to 19 form the signal peptide; the sequence is MRFGWLEVAALTAASVANA. N-linked (GlcNAc...) asparagine glycosylation is found at asparagine 71, asparagine 222, and asparagine 263. Aspartate 291 is a catalytic residue. N-linked (GlcNAc...) asparagine glycosylation is found at asparagine 326, asparagine 333, asparagine 365, asparagine 453, asparagine 534, asparagine 553, asparagine 575, asparagine 679, and asparagine 725. The disordered stretch occupies residues 731 to 764; that stretch reads DSSDDPNYGWQDSEYIPEGARDGSPQPLLKAGGA.

The protein belongs to the glycosyl hydrolase 3 family.

Its subcellular location is the secreted. The catalysed reaction is Hydrolysis of terminal, non-reducing beta-D-glucosyl residues with release of beta-D-glucose.. It functions in the pathway glycan metabolism; cellulose degradation. Its function is as follows. Beta-glucosidases are one of a number of cellulolytic enzymes involved in the degradation of cellulosic biomass. Catalyzes the last step releasing glucose from the inhibitory cellobiose. This chain is Probable beta-glucosidase A (bglA), found in Aspergillus fumigatus (strain ATCC MYA-4609 / CBS 101355 / FGSC A1100 / Af293) (Neosartorya fumigata).